The following is an 821-amino-acid chain: TORTIFOLIA1-like protein 1 (821 aa).

HEAT repeat units lie at residues 69 to 110 (PDSP…SYTD), 114 to 151 (SQLA…QFLK), 163 to 201 (SSLV…SATE), 205 to 242 (AAFQ…VGAI), and 245 to 282 (QSLE…HSSS). Ser-406 is subject to Phosphoserine. Disordered stretches follow at residues 416-437 (PSRQ…NTSV) and 553-610 (MSIQ…RAWD). Residues 501–554 (PPLQRQLLHLERQQTHIMNMLQDFMGGSHDGMISLENRVRGLERIVEEMSREMS) adopt a coiled-coil conformation. A compositionally biased stretch (polar residues) spans 579–590 (YGPSSRNTQTST).

As to expression, expressed at low levels in roots, hypocotyls, stems, flowers, siliques, cotyledons, and leaves. Particularly present in hydathodes of cotyledons and root hairs.

The protein localises to the cytoplasm. It localises to the cytoskeleton. Its function is as follows. Plant-specific microtubule-associated protein (MAP) that regulates the orientation of cortical microtubules and the direction of organ growth. The polypeptide is TORTIFOLIA1-like protein 1 (Arabidopsis thaliana (Mouse-ear cress)).